A 151-amino-acid chain; its full sequence is Small ribosomal subunit protein uS15 (151 aa).

Belongs to the universal ribosomal protein uS15 family.

This chain is Small ribosomal subunit protein uS15 (RpS13), found in Plutella xylostella (Diamondback moth).